A 287-amino-acid chain; its full sequence is Nucleotide-binding protein Ajs_0902 (287 aa).

10–17 (GMSGSGKS) is an ATP binding site. 59 to 62 (DVRS) lines the GTP pocket.

The protein belongs to the RapZ-like family.

Displays ATPase and GTPase activities. This chain is Nucleotide-binding protein Ajs_0902, found in Acidovorax sp. (strain JS42).